A 118-amino-acid polypeptide reads, in one-letter code: uncharacterized protein (118 aa).

This is an uncharacterized protein from Aquifex aeolicus (strain VF5).